A 644-amino-acid chain; its full sequence is ATP-dependent zinc metalloprotease FtsH (644 aa).

Over 1–4 (MAKN) the chain is Cytoplasmic. A helical membrane pass occupies residues 5 to 25 (LILWLVIAVVLMSVFQSFGPS). Residues 26 to 98 (ESNGRKVDYS…VGEPPEEPSL (73 aa)) lie on the Periplasmic side of the membrane. The helical transmembrane segment at 99–119 (LASIFISWFPMLLLIGVWIFF) threads the bilayer. The Cytoplasmic portion of the chain corresponds to 120 to 644 (MRQMQGGGGK…NTMSEQLGDK (525 aa)). 192-199 (GPPGTGKT) is a binding site for ATP. His414 lines the Zn(2+) pocket. Glu415 is an active-site residue. Zn(2+) is bound by residues His418 and Asp492. Residues 599-644 (RPPAGWEDPNGTNNSDSNGTPQAPRPVDEPRTPNPGNTMSEQLGDK) form a disordered region. 2 stretches are compositionally biased toward polar residues: residues 608–619 (NGTNNSDSNGTP) and 632–644 (NPGNTMSEQLGDK).

This sequence in the central section; belongs to the AAA ATPase family. It in the C-terminal section; belongs to the peptidase M41 family. As to quaternary structure, homohexamer. It depends on Zn(2+) as a cofactor.

The protein localises to the cell inner membrane. Its function is as follows. Acts as a processive, ATP-dependent zinc metallopeptidase for both cytoplasmic and membrane proteins. Plays a role in the quality control of integral membrane proteins. The sequence is that of ATP-dependent zinc metalloprotease FtsH from Salmonella typhi.